A 210-amino-acid chain; its full sequence is WASH complex subunit 3 (210 aa).

Residues 49–73 (EEKLASISLRIQQIETTLSILEAKL) are a coiled coil. Residues 173-210 (LDPNLLDTPDAPVPDAVKKNTLDQDDDSDDGSESSFSD) form a disordered region. The segment covering 195-204 (DQDDDSDDGS) has biased composition (acidic residues).

The protein belongs to the CCDC53 family. In terms of assembly, component of the WASH complex.

In Salmo salar (Atlantic salmon), this protein is WASH complex subunit 3.